We begin with the raw amino-acid sequence, 214 residues long: 3-isopropylmalate dehydratase small subunit (214 aa).

The protein belongs to the LeuD family. LeuD type 1 subfamily. Heterodimer of LeuC and LeuD.

The enzyme catalyses (2R,3S)-3-isopropylmalate = (2S)-2-isopropylmalate. It participates in amino-acid biosynthesis; L-leucine biosynthesis; L-leucine from 3-methyl-2-oxobutanoate: step 2/4. Functionally, catalyzes the isomerization between 2-isopropylmalate and 3-isopropylmalate, via the formation of 2-isopropylmaleate. The sequence is that of 3-isopropylmalate dehydratase small subunit from Pseudomonas putida (strain GB-1).